Consider the following 131-residue polypeptide: Acanthoscurrin-2 (131 aa).

Residue lysine 130 is modified to Lysine amide.

Expressed in hemocytes and secreted into the plasma following bacterial immune challenge.

It is found in the secreted. In terms of biological role, antimicrobial protein. Strong activity against the Gram-negative bacterium E.coli SBS363 and yeast C.albicans. No detectable activity against the Gram-positive bacterium M.luteus. The protein is Acanthoscurrin-2 of Acanthoscurria gomesiana (Tarantula spider).